The following is a 369-amino-acid chain: Dihydroorotate dehydrogenase (quinone) (369 aa).

Residues 66 to 70 (AGFDK) and Thr90 contribute to the FMN site. A substrate-binding site is contributed by Lys70. 115-119 (NRMGF) contacts substrate. 2 residues coordinate FMN: Asn143 and Asn176. Asn176 is a binding site for substrate. The active-site Nucleophile is Ser179. Asn181 is a binding site for substrate. Positions 217 and 245 each coordinate FMN. 246–247 (NT) lines the substrate pocket. Residues Gly271, Gly300, and 321–322 (YT) each bind FMN.

It belongs to the dihydroorotate dehydrogenase family. Type 2 subfamily. In terms of assembly, monomer. The cofactor is FMN.

It is found in the cell membrane. The catalysed reaction is (S)-dihydroorotate + a quinone = orotate + a quinol. It functions in the pathway pyrimidine metabolism; UMP biosynthesis via de novo pathway; orotate from (S)-dihydroorotate (quinone route): step 1/1. Functionally, catalyzes the conversion of dihydroorotate to orotate with quinone as electron acceptor. This chain is Dihydroorotate dehydrogenase (quinone), found in Nocardia farcinica (strain IFM 10152).